The primary structure comprises 601 residues: uncharacterized protein (601 aa).

Helical transmembrane passes span 74 to 94 (IFFF…VFSI), 104 to 124 (VSFL…PNDG), and 531 to 551 (LVLL…NYYY).

Its subcellular location is the endoplasmic reticulum membrane. This is an uncharacterized protein from Schizosaccharomyces pombe (strain 972 / ATCC 24843) (Fission yeast).